A 127-amino-acid chain; its full sequence is MATVSRKKKKVKVTPEGVVHIKASFNNIMVTITDVQGNTVSWSSAGKNGFRGSKKNTPYASQVTSEGAAKEAYDLGMRHVDVFIKGPGAGRDAAIRALQGAGLEVRSIKDITPLPHNGCRPPKRRRV.

The protein belongs to the universal ribosomal protein uS11 family. Part of the 30S ribosomal subunit. Interacts with proteins S7 and S18. Binds to IF-3.

In terms of biological role, located on the platform of the 30S subunit, it bridges several disparate RNA helices of the 16S rRNA. Forms part of the Shine-Dalgarno cleft in the 70S ribosome. This is Small ribosomal subunit protein uS11 from Chlorobium luteolum (strain DSM 273 / BCRC 81028 / 2530) (Pelodictyon luteolum).